The following is a 236-amino-acid chain: Phosphoribosylaminoimidazole-succinocarboxamide synthase (236 aa).

The protein belongs to the SAICAR synthetase family.

It catalyses the reaction 5-amino-1-(5-phospho-D-ribosyl)imidazole-4-carboxylate + L-aspartate + ATP = (2S)-2-[5-amino-1-(5-phospho-beta-D-ribosyl)imidazole-4-carboxamido]succinate + ADP + phosphate + 2 H(+). It participates in purine metabolism; IMP biosynthesis via de novo pathway; 5-amino-1-(5-phospho-D-ribosyl)imidazole-4-carboxamide from 5-amino-1-(5-phospho-D-ribosyl)imidazole-4-carboxylate: step 1/2. This is Phosphoribosylaminoimidazole-succinocarboxamide synthase from Pseudomonas paraeruginosa (strain DSM 24068 / PA7) (Pseudomonas aeruginosa (strain PA7)).